The following is a 396-amino-acid chain: 1-deoxy-D-xylulose 5-phosphate reductoisomerase (396 aa).

NADPH is bound by residues Thr15, Gly16, Ile18, and Asn127. Lys128 contacts 1-deoxy-D-xylulose 5-phosphate. An NADPH-binding site is contributed by Glu129. Residue Asp153 participates in Mn(2+) binding. 1-deoxy-D-xylulose 5-phosphate is bound by residues Ser154, Glu155, Ser177, and His200. Position 155 (Glu155) interacts with Mn(2+). Residue Gly206 participates in NADPH binding. Residues Ser213, Asn218, Lys219, and Glu222 each coordinate 1-deoxy-D-xylulose 5-phosphate. Position 222 (Glu222) interacts with Mn(2+).

This sequence belongs to the DXR family. The cofactor is Mg(2+). It depends on Mn(2+) as a cofactor.

It carries out the reaction 2-C-methyl-D-erythritol 4-phosphate + NADP(+) = 1-deoxy-D-xylulose 5-phosphate + NADPH + H(+). It participates in isoprenoid biosynthesis; isopentenyl diphosphate biosynthesis via DXP pathway; isopentenyl diphosphate from 1-deoxy-D-xylulose 5-phosphate: step 1/6. In terms of biological role, catalyzes the NADPH-dependent rearrangement and reduction of 1-deoxy-D-xylulose-5-phosphate (DXP) to 2-C-methyl-D-erythritol 4-phosphate (MEP). This Anaplasma marginale (strain Florida) protein is 1-deoxy-D-xylulose 5-phosphate reductoisomerase.